We begin with the raw amino-acid sequence, 419 residues long: tRNA(Met) cytidine acetate ligase (419 aa).

Residues 7–20, glycine 101, asparagine 163, and arginine 188 each bind ATP; that span reads ITEYNPFHNGHLHH.

Belongs to the TmcAL family.

The protein resides in the cytoplasm. The enzyme catalyses cytidine(34) in elongator tRNA(Met) + acetate + ATP = N(4)-acetylcytidine(34) in elongator tRNA(Met) + AMP + diphosphate. Its function is as follows. Catalyzes the formation of N(4)-acetylcytidine (ac(4)C) at the wobble position of elongator tRNA(Met), using acetate and ATP as substrates. First activates an acetate ion to form acetyladenylate (Ac-AMP) and then transfers the acetyl group to tRNA to form ac(4)C34. The polypeptide is tRNA(Met) cytidine acetate ligase (Syntrophotalea carbinolica (strain DSM 2380 / NBRC 103641 / GraBd1) (Pelobacter carbinolicus)).